Consider the following 852-residue polypeptide: DNA polymerase kappa (852 aa).

The region spanning 102–357 (IVHVDMDAFY…LPIRKVSGIG (256 aa)) is the UmuC domain. Asp106 and Asp197 together coordinate Mg(2+). Residues 252 to 273 (FEDSPPDLQPQGSPFQLNSEEQ) are disordered. Over residues 261–273 (PQGSPFQLNSEEQ) the composition is skewed to polar residues. UBZ4-type zinc fingers lie at residues 619–649 (TFIC…DGPS) and 761–791 (ALVC…NKGI). Zn(2+) is bound by residues Cys622, Cys625, His640, Cys644, Cys764, Cys767, His782, and Cys786. The segment at 798-852 (SEGNSVKQPKESSRSTDRLQKASGRTKRPGTKTKSSTLKKTKPRDPRHTLDGFFK) is disordered. Residues 805–817 (QPKESSRSTDRLQ) show a composition bias toward basic and acidic residues. Over residues 821–839 (GRTKRPGTKTKSSTLKKTK) the composition is skewed to basic residues. The segment covering 840-852 (PRDPRHTLDGFFK) has biased composition (basic and acidic residues).

It belongs to the DNA polymerase type-Y family. As to quaternary structure, interacts with PCNA. Interacts with REV1. Requires Mg(2+) as cofactor. The cofactor is Mn(2+). In terms of tissue distribution, detected at low levels in heart, brain, lung, liver, kidney and testis.

Its subcellular location is the nucleus. The catalysed reaction is DNA(n) + a 2'-deoxyribonucleoside 5'-triphosphate = DNA(n+1) + diphosphate. In terms of biological role, DNA polymerase specifically involved in DNA repair. Plays an important role in translesion synthesis, where the normal high-fidelity DNA polymerases cannot proceed and DNA synthesis stalls. Depending on the context, it inserts the correct base, but causes frequent base transitions, transversions and frameshifts. Lacks 3'-5' proofreading exonuclease activity. Forms a Schiff base with 5'-deoxyribose phosphate at abasic sites, but does not have lyase activity. This chain is DNA polymerase kappa (Polk), found in Mus musculus (Mouse).